We begin with the raw amino-acid sequence, 385 residues long: 1-deoxy-D-xylulose 5-phosphate reductoisomerase (385 aa).

Positions 10, 11, 12, 13, 36, 38, and 122 each coordinate NADPH. Lysine 123 provides a ligand contact to 1-deoxy-D-xylulose 5-phosphate. Residue glutamate 124 participates in NADPH binding. Residue aspartate 148 participates in Mn(2+) binding. Positions 149, 150, 174, and 197 each coordinate 1-deoxy-D-xylulose 5-phosphate. Glutamate 150 is a Mn(2+) binding site. Glycine 203 is a binding site for NADPH. Positions 210, 215, 216, and 219 each coordinate 1-deoxy-D-xylulose 5-phosphate. A Mn(2+)-binding site is contributed by glutamate 219.

Belongs to the DXR family. Requires Mg(2+) as cofactor. It depends on Mn(2+) as a cofactor.

It catalyses the reaction 2-C-methyl-D-erythritol 4-phosphate + NADP(+) = 1-deoxy-D-xylulose 5-phosphate + NADPH + H(+). It functions in the pathway isoprenoid biosynthesis; isopentenyl diphosphate biosynthesis via DXP pathway; isopentenyl diphosphate from 1-deoxy-D-xylulose 5-phosphate: step 1/6. In terms of biological role, catalyzes the NADPH-dependent rearrangement and reduction of 1-deoxy-D-xylulose-5-phosphate (DXP) to 2-C-methyl-D-erythritol 4-phosphate (MEP). The chain is 1-deoxy-D-xylulose 5-phosphate reductoisomerase from Geobacter sp. (strain M21).